Reading from the N-terminus, the 158-residue chain is ATP synthase subunit delta, mitochondrial (158 aa).

The N-terminal 22 residues, 1–22 (MFRLTSARALFRVANVAARRTY), are a transit peptide targeting the mitochondrion.

This sequence belongs to the ATPase epsilon chain family. In terms of assembly, F-type ATPases have 2 components, CF(1) - the catalytic core - and CF(0) - the membrane proton channel. CF(1) has five subunits: alpha(3), beta(3), gamma(1), delta(1), epsilon(1). CF(0) has three main subunits: a, b and c.

The protein localises to the mitochondrion. It is found in the mitochondrion inner membrane. Functionally, mitochondrial membrane ATP synthase (F(1)F(0) ATP synthase or Complex V) produces ATP from ADP in the presence of a proton gradient across the membrane which is generated by electron transport complexes of the respiratory chain. F-type ATPases consist of two structural domains, F(1) - containing the extramembraneous catalytic core, and F(0) - containing the membrane proton channel, linked together by a central stalk and a peripheral stalk. During catalysis, ATP turnover in the catalytic domain of F(1) is coupled via a rotary mechanism of the central stalk subunits to proton translocation. Part of the complex F(1) domain and of the central stalk which is part of the complex rotary element. Rotation of the central stalk against the surrounding alpha(3)beta(3) subunits leads to hydrolysis of ATP in three separate catalytic sites on the beta subunits. This Eremothecium gossypii (strain ATCC 10895 / CBS 109.51 / FGSC 9923 / NRRL Y-1056) (Yeast) protein is ATP synthase subunit delta, mitochondrial (ATP16).